A 274-amino-acid polypeptide reads, in one-letter code: CTO1 family protein C17G9.12c (274 aa).

Belongs to the CTO1 family.

The protein resides in the cytoplasm. The protein localises to the nucleus. The chain is CTO1 family protein C17G9.12c from Schizosaccharomyces pombe (strain 972 / ATCC 24843) (Fission yeast).